Here is a 121-residue protein sequence, read N- to C-terminus: Small ribosomal subunit protein bS6 (121 aa).

The protein belongs to the bacterial ribosomal protein bS6 family.

In terms of biological role, binds together with bS18 to 16S ribosomal RNA. This Rickettsia felis (strain ATCC VR-1525 / URRWXCal2) (Rickettsia azadi) protein is Small ribosomal subunit protein bS6.